The sequence spans 156 residues: Ribosomal RNA large subunit methyltransferase H (156 aa).

Residues leucine 73, glycine 104, and leucine 123–leucine 128 each bind S-adenosyl-L-methionine.

Belongs to the RNA methyltransferase RlmH family. As to quaternary structure, homodimer.

Its subcellular location is the cytoplasm. The catalysed reaction is pseudouridine(1915) in 23S rRNA + S-adenosyl-L-methionine = N(3)-methylpseudouridine(1915) in 23S rRNA + S-adenosyl-L-homocysteine + H(+). Specifically methylates the pseudouridine at position 1915 (m3Psi1915) in 23S rRNA. This chain is Ribosomal RNA large subunit methyltransferase H, found in Shewanella pealeana (strain ATCC 700345 / ANG-SQ1).